The following is a 662-amino-acid chain: PAN2-PAN3 deadenylation complex subunit PAN3 (662 aa).

Disordered stretches follow at residues Met1–Asp29 and Asp53–Thr133. The C3H1-type zinc finger occupies Asn26–His55. The segment covering Ser75–Ser102 has biased composition (low complexity). Polar residues predominate over residues Ser115–Thr133. The interval Gln263–Ser525 is pseudokinase domain. ATP contacts are provided by residues Arg315, Asp364–Thr371, and Ser425–Lys426. A coiled-coil region spans residues Ser526–Phe564. The segment at Val565 to His662 is knob domain.

The protein belongs to the protein kinase superfamily. PAN3 family. In terms of assembly, homodimer. Forms a heterotrimer with a catalytic subunit pan2 to form the poly(A)-nuclease (PAN) deadenylation complex. Interacts (via PAM-2 motif) with poly(A)-binding protein pab1 (via PABC domain), conferring substrate specificity of the enzyme complex.

The protein resides in the cytoplasm. Its function is as follows. Regulatory subunit of the poly(A)-nuclease (PAN) deadenylation complex, one of two cytoplasmic mRNA deadenylases involved in mRNA turnover. PAN specifically shortens poly(A) tails of RNA and the activity is stimulated by poly(A)-binding protein pab1. PAN deadenylation is followed by rapid degradation of the shortened mRNA tails by the CCR4-NOT complex. Deadenylated mRNAs are then degraded by two alternative mechanisms, namely exosome-mediated 3'-5' exonucleolytic degradation, or deadenylation-dependent mRNA decaping and subsequent 5'-3' exonucleolytic degradation by xrn1. May also be involved in post-transcriptional maturation of mRNA poly(A) tails. pan3 acts as a positive regulator for PAN activity, recruiting the catalytic subunit pan2 to mRNA via its interaction with RNA and with pab1. This Aspergillus fumigatus (strain ATCC MYA-4609 / CBS 101355 / FGSC A1100 / Af293) (Neosartorya fumigata) protein is PAN2-PAN3 deadenylation complex subunit PAN3.